A 269-amino-acid polypeptide reads, in one-letter code: Aquaporin-1 (269 aa).

At 1–11 (MASEFKKKLFW) the chain is on the cytoplasmic side. Residues 12-29 (RAVVAEFLAMTLFVFISI) traverse the membrane as a helical segment. The Extracellular portion of the chain corresponds to 30–46 (GSALGFKYPVGNNQTAV). N42 carries N-linked (GlcNAc...) asparagine glycosylation. Residues 47–65 (QDNVKVSLAFGLSIATLAQ) form a helical membrane-spanning segment. The Cytoplasmic portion of the chain corresponds to 66–68 (SVG). The stretch at 69-82 (HISGAHLNPAVTLG) is an intramembrane region. The NPA 1 motif lies at 76–78 (NPA). Over 83 to 90 (LLLSCQIS) the chain is Cytoplasmic. A helical transmembrane segment spans residues 91–109 (IFRALMYIIAQCVGAIVAT). Residues 110–133 (AILSGITSSLPGNSLGRNDLADGV) lie on the Extracellular side of the membrane. The helical transmembrane segment at 134 to 153 (NSGQGLGIEIIGTLQLVLCV) threads the bilayer. Over 154 to 163 (LATTDRRRRD) the chain is Cytoplasmic. A helical transmembrane segment spans residues 164–181 (LGGSAPLAIGLSVALGHL). The Extracellular portion of the chain corresponds to 182–186 (LAIDY). An intramembrane segment occupies 187–199 (TGCGINPARSFGS). An NPA 2 motif is present at residues 192–194 (NPA). The Extracellular segment spans residues 200 to 206 (AVITHNF). The N-linked (GlcNAc...) asparagine glycan is linked to N205. Residues 207-224 (SNHWIFWVGPFIGGALAV) traverse the membrane as a helical segment. Residues 225–269 (LIYDFILAPRSSDFTDRVKVWTSGQVEEYDLDADDINSRVEMKPK) are Cytoplasmic-facing. S247 carries the phosphoserine modification. A Phosphotyrosine modification is found at Y253. S262 is modified (phosphoserine).

This sequence belongs to the MIP/aquaporin (TC 1.A.8) family. As to quaternary structure, homotetramer; each monomer provides an independent water pore. Component of the ankyrin-1 complex in the erythrocyte, composed of ANK1, RHCE, RHAG, SLC4A1, EPB42, GYPA, GYPB and AQP1. Interacts with EPHB2; involved in endolymph production in the inner ear. Identified in a complex with STOM. Interacts (via the N-terminal) with ANK1 (via ANK 1-5 repeats). Interacts (via the C-terminal) with EPB42.

It localises to the cell membrane. The enzyme catalyses H2O(in) = H2O(out). It carries out the reaction nitric oxide(out) = nitric oxide(in). The catalysed reaction is CO2(out) = CO2(in). It catalyses the reaction glycerol(in) = glycerol(out). The enzyme catalyses H2O2(out) = H2O2(in). It carries out the reaction K(+)(in) = K(+)(out). The catalysed reaction is Na(+)(in) = Na(+)(out). Its function is as follows. Forms a water channel that facilitates the transport of water across cell membranes, playing a crucial role in water homeostasis in various tissues. Could also be permeable to small solutes including hydrogen peroxide, glycerol and gases such as amonnia (NH3), nitric oxide (NO) and carbon dioxide (CO2). Recruited to the ankyrin-1 complex, a multiprotein complex of the erythrocyte membrane, it could be part of a CO2 metabolon, linking facilitated diffusion of CO2 across the membrane, anion exchange of Cl(-)/HCO3(-) and interconversion of dissolved CO2 and carbonic acid in the cytosol. In vitro, it shows non-selective gated cation channel activity and may be permeable to cations like K(+) and Na(+) in vivo. This is Aquaporin-1 from Pongo abelii (Sumatran orangutan).